The sequence spans 69 residues: Small ribosomal subunit protein bS21 (69 aa).

The protein belongs to the bacterial ribosomal protein bS21 family.

The protein is Small ribosomal subunit protein bS21 of Hyphomonas neptunium (strain ATCC 15444).